Consider the following 450-residue polypeptide: Probable glycine dehydrogenase (decarboxylating) subunit 1 (450 aa).

The protein belongs to the GcvP family. N-terminal subunit subfamily. As to quaternary structure, the glycine cleavage system is composed of four proteins: P, T, L and H. In this organism, the P 'protein' is a heterodimer of two subunits.

The catalysed reaction is N(6)-[(R)-lipoyl]-L-lysyl-[glycine-cleavage complex H protein] + glycine + H(+) = N(6)-[(R)-S(8)-aminomethyldihydrolipoyl]-L-lysyl-[glycine-cleavage complex H protein] + CO2. Functionally, the glycine cleavage system catalyzes the degradation of glycine. The P protein binds the alpha-amino group of glycine through its pyridoxal phosphate cofactor; CO(2) is released and the remaining methylamine moiety is then transferred to the lipoamide cofactor of the H protein. The sequence is that of Probable glycine dehydrogenase (decarboxylating) subunit 1 from Desulfotalea psychrophila (strain LSv54 / DSM 12343).